Reading from the N-terminus, the 607-residue chain is Phosphomethylpyrimidine synthase (607 aa).

Residues Asn216, Met245, Tyr274, His310, 330–332 (SRG), 371–374 (DGLR), and Glu410 contribute to the substrate site. Residue His414 coordinates Zn(2+). Tyr437 is a binding site for substrate. A Zn(2+)-binding site is contributed by His478. 3 residues coordinate [4Fe-4S] cluster: Cys558, Cys561, and Cys566.

It belongs to the ThiC family. As to quaternary structure, homodimer. It depends on [4Fe-4S] cluster as a cofactor.

The catalysed reaction is 5-amino-1-(5-phospho-beta-D-ribosyl)imidazole + S-adenosyl-L-methionine = 4-amino-2-methyl-5-(phosphooxymethyl)pyrimidine + CO + 5'-deoxyadenosine + formate + L-methionine + 3 H(+). It functions in the pathway cofactor biosynthesis; thiamine diphosphate biosynthesis. In terms of biological role, catalyzes the synthesis of the hydroxymethylpyrimidine phosphate (HMP-P) moiety of thiamine from aminoimidazole ribotide (AIR) in a radical S-adenosyl-L-methionine (SAM)-dependent reaction. This Agrobacterium fabrum (strain C58 / ATCC 33970) (Agrobacterium tumefaciens (strain C58)) protein is Phosphomethylpyrimidine synthase.